The chain runs to 347 residues: Selenide, water dikinase (347 aa).

Residue selenocysteine 17 is part of the active site. A non-standard amino acid (selenocysteine) is located at residue selenocysteine 17. ATP is bound by residues lysine 20 and 48 to 50 (TAD). A Mg(2+)-binding site is contributed by aspartate 51. ATP-binding positions include aspartate 68, aspartate 91, and 139–141 (GHS). A Mg(2+)-binding site is contributed by aspartate 91. Aspartate 227 contributes to the Mg(2+) binding site.

The protein belongs to the selenophosphate synthase 1 family. Class I subfamily. As to quaternary structure, homodimer. It depends on Mg(2+) as a cofactor.

It catalyses the reaction hydrogenselenide + ATP + H2O = selenophosphate + AMP + phosphate + 2 H(+). In terms of biological role, synthesizes selenophosphate from selenide and ATP. The sequence is that of Selenide, water dikinase from Haemophilus influenzae (strain 86-028NP).